The sequence spans 235 residues: Small ribosomal subunit protein eS4 (235 aa).

Residues 37-100 (LPLGIIIRDI…NETYRMFQDE (64 aa)) enclose the S4 RNA-binding domain.

The protein belongs to the eukaryotic ribosomal protein eS4 family.

This chain is Small ribosomal subunit protein eS4, found in Methanosarcina barkeri (strain Fusaro / DSM 804).